A 445-amino-acid polypeptide reads, in one-letter code: MREIVHIQAGQCGNQIGAKFWEVISDEHGIDPTGSYHGDSDLQLERINVYYNEAAGNKYVPRAILVDLEPGTMDSVRSGPFGQIFRPDNFVFGQSGAGNNWAKGHYTEGAELVDSVLDVVRKESESCDCLQGFQLTHSLGGGTGSGMGTLLISKIREEYPDRIMNTFSVVPSPKVSDTVVEPYNATLSVHQLVENTDETYCIDNEALYDICFRTLKLTTPTYGDLNHLVSATMSGVTTCLRFPGQLNADLRKLAVNMVPFPRLHFFMPGFAPLTSRGSQQYRALTVPELTQQMFDAKNMMAACDPRHGRYLTVAAVFRGRMSMKEVDEQMLNVQNKNSSYFVEWIPNNVKTAVCDIPPRGLKMSATFIGNSTAIQELFKRISEQFTAMFRRKAFLHWYTGEGMDEMEFTEAESNMNDLVSEYQQYQDATADEQGEFEEEGEEDEA.

The short motif at 1–4 (MREI) is the MREI motif element. Glutamine 11 provides a ligand contact to GTP. At serine 40 the chain carries Phosphoserine. An N6-acetyllysine; alternate modification is found at lysine 58. Lysine 58 is subject to N6-succinyllysine; alternate. Lysine 58 participates in a covalent cross-link: Glycyl lysine isopeptide (Lys-Gly) (interchain with G-Cter in ubiquitin); alternate. GTP is bound by residues glutamate 69, serine 138, glycine 142, threonine 143, and glycine 144. A Mg(2+)-binding site is contributed by glutamate 69. Serine 172 carries the post-translational modification Phosphoserine; by CDK1. Asparagine 204 and asparagine 226 together coordinate GTP. Threonine 285 and threonine 290 each carry phosphothreonine. Omega-N-methylarginine is present on arginine 318. Lysine 324 participates in a covalent cross-link: Glycyl lysine isopeptide (Lys-Gly) (interchain with G-Cter in ubiquitin). Residues 424–445 (QYQDATADEQGEFEEEGEEDEA) are disordered. Positions 429–445 (TADEQGEFEEEGEEDEA) are enriched in acidic residues. At glutamate 438 the chain carries 5-glutamyl polyglutamate.

It belongs to the tubulin family. As to quaternary structure, dimer of alpha and beta chains. A typical microtubule is a hollow water-filled tube with an outer diameter of 25 nm and an inner diameter of 15 nM. Alpha-beta heterodimers associate head-to-tail to form protofilaments running lengthwise along the microtubule wall with the beta-tubulin subunit facing the microtubule plus end conferring a structural polarity. Microtubules usually have 13 protofilaments but different protofilament numbers can be found in some organisms and specialized cells. Interacts with NCKAP5L. Requires Mg(2+) as cofactor. In terms of processing, some glutamate residues at the C-terminus are polyglycylated, resulting in polyglycine chains on the gamma-carboxyl group. Glycylation is mainly limited to tubulin incorporated into axonemes (cilia and flagella) whereas glutamylation is prevalent in neuronal cells, centrioles, axonemes, and the mitotic spindle. Both modifications can coexist on the same protein on adjacent residues, and lowering polyglycylation levels increases polyglutamylation, and reciprocally. Cilia and flagella glycylation is required for their stability and maintenance. Flagella glycylation controls sperm motility. Some glutamate residues at the C-terminus are polyglutamylated, resulting in polyglutamate chains on the gamma-carboxyl group. Polyglutamylation plays a key role in microtubule severing by spastin (SPAST). SPAST preferentially recognizes and acts on microtubules decorated with short polyglutamate tails: severing activity by SPAST increases as the number of glutamates per tubulin rises from one to eight, but decreases beyond this glutamylation threshold. Post-translationally, phosphorylated on Ser-172 by CDK1 during the cell cycle, from metaphase to telophase, but not in interphase. This phosphorylation inhibits tubulin incorporation into microtubules.

The protein localises to the cytoplasm. It localises to the cytoskeleton. Functionally, tubulin is the major constituent of microtubules, a cylinder consisting of laterally associated linear protofilaments composed of alpha- and beta-tubulin heterodimers. Microtubules grow by the addition of GTP-tubulin dimers to the microtubule end, where a stabilizing cap forms. Below the cap, tubulin dimers are in GDP-bound state, owing to GTPase activity of alpha-tubulin. The protein is Tubulin beta chain of Sus scrofa (Pig).